Reading from the N-terminus, the 333-residue chain is Ribosome biogenesis regulatory protein homolog (333 aa).

2 disordered regions span residues 227–248 (KANV…VSGE) and 271–333 (AAAV…ARKG). Residues 278–295 (LREKKEKSERKGAKDQTR) are compositionally biased toward basic and acidic residues. The segment covering 324–333 (GANKAKARKG) has biased composition (basic residues).

This sequence belongs to the RRS1 family.

The protein resides in the nucleus. Its subcellular location is the nucleolus. Functionally, involved in ribosomal large subunit assembly. This chain is Ribosome biogenesis regulatory protein homolog, found in Caenorhabditis elegans.